The following is a 786-amino-acid chain: Rho GTPase-activating protein 10 (786 aa).

One can recognise a BAR domain in the interval 7–262 (EFSDCYLDSP…IRQNPKDHKR (256 aa)). The region spanning 265–372 (QFTAEGYLYV…WLEALGGKEA (108 aa)) is the PH domain. The Rho-GAP domain maps to 389-574 (AQLDKMGFTI…ILIENHEKIF (186 aa)). Disordered regions lie at residues 576 to 608 (TPPD…QRTK) and 621 to 727 (EDGD…PPES). Basic residues predominate over residues 599 to 608 (QSKRQGQRTK). A compositionally biased stretch (low complexity) spans 634–651 (PTSSLDSLSSPSPVTTAV). Over residues 676-688 (IPGQTRSSMVQWL) the composition is skewed to polar residues. Residues 689-712 (NPQSPTTTSSNSAVTPLSPGSSPF) are compositionally biased toward low complexity. Positions 728–786 (IRSRKARAVYPCEAEHSSELSFEIGAIFEDVQTSREPGWLEGTLNGKRGLIPQNYVKLL) constitute an SH3 domain.

As to quaternary structure, interacts with PKN3. Interacts with caspase-activated PAK2 proteolytic fragment PAK-2p34; the interaction does not affect GRAF2/ARHGAP10 GTPase activation activity towards RHOA and CDC42. Interacts via its SH3 domain with PTK2/FAK1. Interacts with PTK2B/PYK2; the interaction negatively regulates GRAF2/ARHGAP10 GTPase-activating activity. Interacts with MICAL1 and WDR44; complex formation might transit from GRAF2/ARHGAP10-MICAL1 to GRAF2/ARHGAP10-WDR44 complexes. Post-translationally, phosphorylated. Phosphorylated in vitro by constitutive active PKN3. In terms of tissue distribution, high levels of expression in heart and skeletal muscle.

Its subcellular location is the cytoplasm. The protein localises to the perinuclear region. It is found in the cell membrane. It localises to the endosome membrane. GTPase-activating protein that catalyzes the conversion of active GTP-bound Rho GTPases to their inactive GDP-bound form, thus suppressing various Rho GTPase-mediated cellular processes. Also converts Cdc42 to an inactive GDP-bound state. Essential for PTKB2 regulation of cytoskeletal organization via Rho family GTPases. Inhibits PAK2 proteolytic fragment PAK-2p34 kinase activity and changes its localization from the nucleus to the perinuclear region. Stabilizes PAK-2p34 thereby increasing stimulation of cell death. Associates with MICAL1 on the endosomal membrane to promote Rab8-Rab10-dependent tubule extension. After dissociation with MICAL1, recruits WDR44 which connects the endoplasmic reticulum (ER) with the endosomal tubule, thereby participating in the export of a subset of neosynthesized proteins. In Homo sapiens (Human), this protein is Rho GTPase-activating protein 10 (ARHGAP10).